Consider the following 74-residue polypeptide: Peptide BmKb2 (74 aa).

The N-terminal stretch at 1 to 22 is a signal peptide; the sequence is MEIKYLLTVFLVLLIVSDHCQA. Lys-40 carries the post-translational modification Lysine amide. The propeptide occupies 46–74; that stretch reads DLNGQIDHFKNFRKRDAELEELLSKLPIY.

It belongs to the non-disulfide-bridged peptide (NDBP) superfamily. Short antimicrobial peptide (group 4) family.

It localises to the secreted. The protein localises to the target cell membrane. Functionally, antibacterial peptide. This peptide gene is up-regulated at the transcriptional level after the venom gland is challenged by Gram-positive bacteria. The protein is Peptide BmKb2 of Olivierus martensii (Manchurian scorpion).